A 464-amino-acid chain; its full sequence is Protein FAM90A22 (464 aa).

Disordered regions lie at residues 1 to 43 (MMAR…PRLK), 70 to 389 (PATL…HDGA), and 415 to 437 (HSPE…SEAP). Basic and acidic residues-rich tracts occupy residues 74–89 (GKKE…KPRA) and 97–114 (NKDK…DPQR). Residues 182-197 (SLSPLRKTSLSSSSSL) show a composition bias toward low complexity.

Belongs to the FAM90 family.

This is Protein FAM90A22 from Homo sapiens (Human).